A 126-amino-acid polypeptide reads, in one-letter code: MAQLPPGDIATMPNQKVVFNAPFDNKATYYVRVINPGTNRIGFAFKTTKPKRINMNPPNGVLGPKESVNVAISCDAFDPSSEDTKGDRVTVEWCNTPDPAAAAFKLEWFQGDGMVRRKNLPIEYNV.

A2 is subject to N-acetylalanine. The MSP domain maps to 8–125; sequence DIATMPNQKV…RRKNLPIEYN (118 aa).

In terms of tissue distribution, sperm.

It localises to the cell projection. The protein localises to the pseudopodium. It is found in the cytoplasm. Its subcellular location is the cytoskeleton. Central component in molecular interactions underlying sperm crawling. Forms an extensive filament system that extends from sperm villipoda, along the leading edge of the pseudopod. This Globodera rostochiensis (Golden nematode worm) protein is Major sperm protein 2 (MSP-2).